Here is a 284-residue protein sequence, read N- to C-terminus: Hypersensitive-induced response protein 1 (284 aa).

The N-myristoyl glycine moiety is linked to residue Gly2.

Interacts with LRR1.

It localises to the cell membrane. In terms of biological role, positive regulator of hypersensitive response (HR)-like cell death. May be involved in potassium ion channel regulation. The sequence is that of Hypersensitive-induced response protein 1 from Oryza sativa subsp. japonica (Rice).